A 198-amino-acid chain; its full sequence is Recombination protein RecR (198 aa).

A C4-type zinc finger spans residues 56–71; that stretch reads CHVCGNVDTGDPCGIC. The Toprim domain maps to 79-174; sequence RMLCVVEEVA…RLTQLAHGLP (96 aa).

Belongs to the RecR family.

Functionally, may play a role in DNA repair. It seems to be involved in an RecBC-independent recombinational process of DNA repair. It may act with RecF and RecO. This chain is Recombination protein RecR, found in Rhizorhabdus wittichii (strain DSM 6014 / CCUG 31198 / JCM 15750 / NBRC 105917 / EY 4224 / RW1) (Sphingomonas wittichii).